The following is a 268-amino-acid chain: Uronate dehydrogenase (268 aa).

NAD(+) is bound by residues 17–18, 37–39, 55–56, and 75–79; these read GL, DIS, DL, and FGGVS. Substrate is bound by residues Ser79 and 115–117; that span reads SNH. Catalysis depends on Tyr140, which acts as the Proton acceptor. Lys144 contributes to the NAD(+) binding site. Ser169 serves as a coordination point for substrate. Ser170 is an NAD(+) binding site. Position 178 (Arg178) interacts with substrate.

The protein belongs to the NAD(P)-dependent epimerase/dehydratase family. In terms of assembly, homohexamer.

It carries out the reaction beta-D-galacturonate + NAD(+) = D-galactaro-1,5-lactone + NADH + H(+). The enzyme catalyses beta-D-glucuronate + NAD(+) = D-glucaro-1,5-lactone + NADH + H(+). It functions in the pathway carbohydrate acid metabolism; D-galacturonate degradation via prokaryotic oxidative pathway. In terms of biological role, catalyzes the oxidation of beta-D-galacturonate and beta-D-glucuronate to galactarate and D-glucarate, respectively. This Pseudomonas putida (strain ATCC 47054 / DSM 6125 / CFBP 8728 / NCIMB 11950 / KT2440) protein is Uronate dehydrogenase (udh).